We begin with the raw amino-acid sequence, 106 residues long: uncharacterized protein (106 aa).

The tract at residues 1–23 is disordered; sequence MASGAPPLTQKTPSHARRKERRR. Residues 14–23 are compositionally biased toward basic residues; sequence SHARRKERRR.

This is an uncharacterized protein from Treponema pallidum (strain Nichols).